The primary structure comprises 91 residues: UPF0386 protein Caul_4643 (91 aa).

It belongs to the UPF0386 family.

This Caulobacter sp. (strain K31) protein is UPF0386 protein Caul_4643.